Here is a 339-residue protein sequence, read N- to C-terminus: Uroporphyrinogen decarboxylase (339 aa).

Residues 23 to 27 (RQAGR), Asp-72, Tyr-147, Thr-202, and His-315 contribute to the substrate site.

Belongs to the uroporphyrinogen decarboxylase family. Homodimer.

The protein resides in the cytoplasm. It carries out the reaction uroporphyrinogen III + 4 H(+) = coproporphyrinogen III + 4 CO2. It participates in porphyrin-containing compound metabolism; protoporphyrin-IX biosynthesis; coproporphyrinogen-III from 5-aminolevulinate: step 4/4. In terms of biological role, catalyzes the decarboxylation of four acetate groups of uroporphyrinogen-III to yield coproporphyrinogen-III. The polypeptide is Uroporphyrinogen decarboxylase (Geobacter sp. (strain M21)).